Consider the following 393-residue polypeptide: Protein TsgA (393 aa).

A run of 12 helical transmembrane segments spans residues 11–31, 51–71, 78–98, 101–121, 134–154, 162–182, 206–226, 245–265, 273–293, 297–317, 332–352, and 361–381; these read WISFLSYALTGALVIVTGMVM, FLNAGILISIFLNAWLMEIVP, FGFLLMVLAVAGLMFSHSLAL, AAMFILGVVSGITMSIGTFLV, LLFTDSFFSMAGMIFPMIAAF, WYWVYACIGLVYVAIFILTFG, IGVLFLSVAALCYILGQLGFI, TLVSNFWMSYMVGMWAFSFIL, ILTVLAGLAAILMYVFNTGTP, AWSILALGFFSSAIYTTIITL, FVLTCGTIGTMLTFVVTGPIV, and LLTANGLYAVVFVMCFLLGFV.

It belongs to the major facilitator superfamily. TsgA family.

It localises to the cell inner membrane. This is Protein TsgA from Escherichia coli O6:K15:H31 (strain 536 / UPEC).